We begin with the raw amino-acid sequence, 459 residues long: Nucleobindin-1 (459 aa).

An N-terminal signal peptide occupies residues 1 to 25 (MPTSVPRGAPFLLLPPLLMLSAVLA). A Phosphoserine modification is found at Ser85. The residue at position 147 (Thr147) is a Phosphothreonine. A coiled-coil region spans residues 149–217 (EARDLELLIQ…QQRRHREHPK (69 aa)). A DNA-binding region spans residues 171–217 (HHEEFKRYEMLKEHERRRYLESLGEEQRKEAERKLQEQQRRHREHPK). The span at 192 to 209 (SLGEEQRKEAERKLQEQQ) shows a compositional bias: basic and acidic residues. Positions 192 to 220 (SLGEEQRKEAERKLQEQQRRHREHPKVNV) are disordered. Residues 227-320 (LKEVWEELDG…VTLEEFLAST (94 aa)) form a binds to GNAI2 and GNAI3 region. EF-hand domains are found at residues 239–274 (PNRFNPKTFFILHDINSDGVLDEQELEALFTKELEK) and 291–326 (ERLRMREHVMKNVDTNQDRLVTLEEFLASTQRKEFG). 8 residues coordinate Ca(2+): Asp252, Asn254, Asp256, Glu263, Asp304, Asn306, Asp308, and Glu315. A GBA motif is present at residues 302-332 (NVDTNQDRLVTLEEFLASTQRKEFGETAEGW). The stretch at 340–407 (AYTEEELKRF…RKQQQQEQSA (68 aa)) forms a coiled coil. The residue at position 368 (Ser368) is a Phosphoserine. Residues 393–459 (LQMEQRKQQQ…VLPQLDSQHL (67 aa)) form a disordered region. Basic and acidic residues predominate over residues 433-445 (DQKDVPASEKKVP). A Phosphoserine modification is found at Ser456.

Belongs to the nucleobindin family. Interacts (via GBA motif) with guanine nucleotide-binding protein G(i) alpha subunits GNAI1, GNAI2 and GNAI3 with higher affinity for GNAI1 and GNAI3 than for GNAI2. Preferentially interacts with inactive rather than active GNAI3. Interaction with GNAI3 is inhibited when NUCB1 binds calcium, probably due to a conformational change which renders the GBA motif inaccessible. Minor constituent of the mineralized matrix of bone. Detected in calvaria, rib cartilage, liver, kidney, spleen, brain, lung, skeletal and heart muscle with highest expression in calvaria and approximately half the amount in kidney, liver and brain.

Its subcellular location is the golgi apparatus. The protein localises to the cis-Golgi network membrane. The protein resides in the cytoplasm. It is found in the secreted. Functionally, major calcium-binding protein of the Golgi which may have a role in calcium homeostasis. Acts as a non-receptor guanine nucleotide exchange factor which binds to and activates alpha subunits of guanine nucleotide-binding proteins (G proteins). This is Nucleobindin-1 (Nucb1) from Rattus norvegicus (Rat).